A 427-amino-acid polypeptide reads, in one-letter code: Serine--tRNA ligase (427 aa).

L-serine is bound at residue 233 to 235 (TAE). Residue 264-266 (RSE) coordinates ATP. Glu-287 is an L-serine binding site. Position 351 to 354 (351 to 354 (EISS)) interacts with ATP. Residue Ser-386 participates in L-serine binding.

This sequence belongs to the class-II aminoacyl-tRNA synthetase family. Type-1 seryl-tRNA synthetase subfamily. Homodimer. The tRNA molecule binds across the dimer.

It is found in the cytoplasm. The catalysed reaction is tRNA(Ser) + L-serine + ATP = L-seryl-tRNA(Ser) + AMP + diphosphate + H(+). It carries out the reaction tRNA(Sec) + L-serine + ATP = L-seryl-tRNA(Sec) + AMP + diphosphate + H(+). It participates in aminoacyl-tRNA biosynthesis; selenocysteinyl-tRNA(Sec) biosynthesis; L-seryl-tRNA(Sec) from L-serine and tRNA(Sec): step 1/1. Functionally, catalyzes the attachment of serine to tRNA(Ser). Is also able to aminoacylate tRNA(Sec) with serine, to form the misacylated tRNA L-seryl-tRNA(Sec), which will be further converted into selenocysteinyl-tRNA(Sec). The sequence is that of Serine--tRNA ligase from Thiobacillus denitrificans (strain ATCC 25259 / T1).